We begin with the raw amino-acid sequence, 275 residues long: NH(3)-dependent NAD(+) synthetase (275 aa).

Residue 46 to 53 (GISGGQDS) coordinates ATP. Asp52 is a binding site for Mg(2+). Residue Arg140 participates in deamido-NAD(+) binding. An ATP-binding site is contributed by Thr160. Glu165 provides a ligand contact to Mg(2+). Positions 173 and 180 each coordinate deamido-NAD(+). Lys189 and Thr211 together coordinate ATP. 260–261 (HK) is a binding site for deamido-NAD(+).

It belongs to the NAD synthetase family. As to quaternary structure, homodimer.

It carries out the reaction deamido-NAD(+) + NH4(+) + ATP = AMP + diphosphate + NAD(+) + H(+). The protein operates within cofactor biosynthesis; NAD(+) biosynthesis; NAD(+) from deamido-NAD(+) (ammonia route): step 1/1. In terms of biological role, catalyzes the ATP-dependent amidation of deamido-NAD to form NAD. Uses ammonia as a nitrogen source. This is NH(3)-dependent NAD(+) synthetase from Shigella flexneri serotype 5b (strain 8401).